The chain runs to 242 residues: MSPSHAEQFSFFLLSGPDLRIADIAGSGNDAGRSRPHLCDIAYGSPCDLAGATDSNPLLMLTYPPEWVKQYRDRDYFSIDPVVRLGRRGFLPVEWSASGWDSGRAYGFFKEAMAFGVGRQGVTLPVRGPQGERSLFTVTSNHPDAYWRQFRMDSMRDLQFLAHHLHDRAMVLSGMRKVADLPRLSRRELQCLEMTANGLLAKQICARLSISVSAVQLYLASARRKLTVATTSEQLLGPRRSN.

In terms of domain architecture, HTH luxR-type spans 177–242; it reads KVADLPRLSR…EQLLGPRRSN (66 aa). A DNA-binding region (H-T-H motif) is located at residues 201-220; that stretch reads AKQICARLSISVSAVQLYLA.

It belongs to the autoinducer-regulated transcriptional regulatory protein family.

This is Transcriptional activator protein RaiR (raiR) from Rhizobium etli.